A 243-amino-acid polypeptide reads, in one-letter code: Glutathione S-transferase omega-2 (243 aa).

Residues 22–101 (GLIRIYSMRF…YLDDAYPGRK (80 aa)) enclose the GST N-terminal domain. The active-site Nucleophile is Cys32. Glutathione-binding positions include Lys59, Ile72, and 85–86 (ES). One can recognise a GST C-terminal domain in the interval 106–231 (DPYERARQKM…IFQGFLNLYF (126 aa)).

Belongs to the GST superfamily. Omega family. In terms of tissue distribution, expressed in a range of tissues, including the liver, kidney, skeletal muscle and prostate. Strongest expression in the testis.

The enzyme catalyses RX + glutathione = an S-substituted glutathione + a halide anion + H(+). The catalysed reaction is L-dehydroascorbate + 2 glutathione = glutathione disulfide + L-ascorbate. It catalyses the reaction methylarsonate + 2 glutathione + H(+) = methylarsonous acid + glutathione disulfide + H2O. Its function is as follows. Exhibits glutathione-dependent thiol transferase activity. Has high dehydroascorbate reductase activity and may contribute to the recycling of ascorbic acid. Participates in the biotransformation of inorganic arsenic and reduces monomethylarsonic acid (MMA). This chain is Glutathione S-transferase omega-2 (GSTO2), found in Homo sapiens (Human).